We begin with the raw amino-acid sequence, 500 residues long: Glutamate decarboxylase (500 aa).

Residue lysine 277 is modified to N6-(pyridoxal phosphate)lysine. The tract at residues 469 to 500 (VHKKTDSEVQLEMITAWKKFVEEKKKKTNRVC) is calmodulin-binding.

Belongs to the group II decarboxylase family. In terms of assembly, homodimer. The cofactor is pyridoxal 5'-phosphate.

The enzyme catalyses L-glutamate + H(+) = 4-aminobutanoate + CO2. Catalyzes the production of GABA. The calmodulin-binding is calcium-dependent and it is proposed that this may, directly or indirectly, form a calcium regulated control of GABA biosynthesis. This chain is Glutamate decarboxylase (GAD), found in Petunia hybrida (Petunia).